The primary structure comprises 495 residues: Serine/threonine-protein kinase F (495 aa).

Positions 46-314 (YLPVKLLGQG…ASAEEVLAVL (269 aa)) constitute a Protein kinase domain. ATP is bound by residues 52 to 60 (LGQGGFGAA) and K77. D187 functions as the Proton acceptor in the catalytic mechanism. The segment at 316–354 (GGKGNQGKAPPGATVSTPQGTNTQIQPTPASSASPLTAP) is disordered. Positions 329–350 (TVSTPQGTNTQIQPTPASSASP) are enriched in polar residues.

This sequence belongs to the protein kinase superfamily. Ser/Thr protein kinase family.

The enzyme catalyses L-seryl-[protein] + ATP = O-phospho-L-seryl-[protein] + ADP + H(+). It catalyses the reaction L-threonyl-[protein] + ATP = O-phospho-L-threonyl-[protein] + ADP + H(+). This chain is Serine/threonine-protein kinase F (spkF), found in Synechocystis sp. (strain ATCC 27184 / PCC 6803 / Kazusa).